A 289-amino-acid polypeptide reads, in one-letter code: MPARASRPAPGLPARAGLGFKPEHYATLVEQPPDLGFFEIHAENYMVPGGPAHAQLAWLRERYAISVHGVGLSLGGHDPLDARLLAGHRQLQRRYAPDSISEHLAWSRHDGRYFNDLLPIVYDDAALRRVCAHIDQFQQCLGQPILLENPATYVRFEASHIDEAQFLCELVARTGCGLLLDVNNVYVSAVNHGFDARAYLARLPLAAVGEIHLAGHARQRDAHGRAVLIDSHDAPVDEAVWDLYEYTLALTGPVATLLERDGNIPPLAGLLAETGRVTACLARGLALAA.

Belongs to the UPF0276 family.

The polypeptide is UPF0276 protein BP2925 (Bordetella pertussis (strain Tohama I / ATCC BAA-589 / NCTC 13251)).